Here is a 101-residue protein sequence, read N- to C-terminus: NAD(P)H-quinone oxidoreductase subunit 4L, chloroplastic (101 aa).

3 helical membrane-spanning segments follow: residues 2-22, 30-52, and 61-81; these read ILEH…YGLI, ALMC…SDFF, and IFSI…LAIV.

This sequence belongs to the complex I subunit 4L family. In terms of assembly, NDH is composed of at least 16 different subunits, 5 of which are encoded in the nucleus.

The protein localises to the plastid. It localises to the chloroplast thylakoid membrane. It catalyses the reaction a plastoquinone + NADH + (n+1) H(+)(in) = a plastoquinol + NAD(+) + n H(+)(out). The enzyme catalyses a plastoquinone + NADPH + (n+1) H(+)(in) = a plastoquinol + NADP(+) + n H(+)(out). Functionally, NDH shuttles electrons from NAD(P)H:plastoquinone, via FMN and iron-sulfur (Fe-S) centers, to quinones in the photosynthetic chain and possibly in a chloroplast respiratory chain. The immediate electron acceptor for the enzyme in this species is believed to be plastoquinone. Couples the redox reaction to proton translocation, and thus conserves the redox energy in a proton gradient. This is NAD(P)H-quinone oxidoreductase subunit 4L, chloroplastic from Oenothera glazioviana (Large-flowered evening primrose).